The sequence spans 368 residues: sn-1 linoleoyl-lipid 6-desaturase (368 aa).

2 helical membrane passes run 47–67 (IILAWVVSAWTFVVFGPDVLW) and 68–88 (MKLLGCIVLGFGVSAVGFNIS). Residues 89 to 93 (HDGNH) carry the Histidine box-1 motif. The short motif at 124–129 (HNVLHH) is the Histidine box-2 element. Transmembrane regions (helical) follow at residues 164-184 (WFIWFVYPFIPYYWSIADVQT), 204-224 (IATLLAFKAFGVAVFLIIPIA), and 233-253 (VIGASIVYMTHGLVACVVFML). The short motif at 305 to 309 (HHLFP) is the Histidine box-3 element.

It belongs to the fatty acid desaturase type 2 family. Fe(2+) serves as cofactor.

The protein resides in the cell inner membrane. The protein localises to the cellular thylakoid membrane. The catalysed reaction is a 1-[(9Z,12Z)-octadecdienoyl]-2-acyl-glycerolipid + 2 reduced [2Fe-2S]-[ferredoxin] + O2 + 2 H(+) = a 1-[(6Z,9Z,12Z)-octadectrienoyl]-2-acyl-glycerolipid + 2 oxidized [2Fe-2S]-[ferredoxin] + 2 H2O. It functions in the pathway lipid metabolism; polyunsaturated fatty acid biosynthesis. With respect to regulation, activity requires ferredoxin, which is the natural electron donor, or cytochrome b5. In addition, activity is increased in the presence of the intermediate electron donors, NADPH and FADH(2). In terms of biological role, desaturase involved in fatty acid biosynthesis. Introduces a double bond at carbon 6 of linoleoyl group (18:2) attached to the sn-1 position of the glycerol moiety of membrane glycerolipids, leading to the formation of gamma-linolenic acid (GLA). This is sn-1 linoleoyl-lipid 6-desaturase from Arthrospira platensis (Spirulina platensis).